The primary structure comprises 88 residues: Small ribosomal subunit protein uS17 (88 aa).

The protein belongs to the universal ribosomal protein uS17 family. As to quaternary structure, part of the 30S ribosomal subunit.

One of the primary rRNA binding proteins, it binds specifically to the 5'-end of 16S ribosomal RNA. In Yersinia pseudotuberculosis serotype O:1b (strain IP 31758), this protein is Small ribosomal subunit protein uS17.